An 84-amino-acid chain; its full sequence is ORF8b protein (84 aa).

Residues 1-82 (MCLKILVRYN…RDVLVVLNKR (82 aa)) form the SARS ORF8 Ig-like domain. Cys22 and Cys40 form a disulfide bridge.

It localises to the host cytoplasm. Its subcellular location is the host nucleus. Its function is as follows. Non-structural protein which is dispensable for virus replication in cell culture. The polypeptide is ORF8b protein (Severe acute respiratory syndrome coronavirus (SARS-CoV)).